Reading from the N-terminus, the 281-residue chain is Energy-coupling factor transporter ATP-binding protein EcfA2 (281 aa).

Residues 3 to 242 form the ABC transporter domain; sequence IKVTGLTYVY…TETLEEIGLA (240 aa). An ATP-binding site is contributed by 40–47; sequence GHTGSGKS.

It belongs to the ABC transporter superfamily. Energy-coupling factor EcfA family. In terms of assembly, forms a stable energy-coupling factor (ECF) transporter complex composed of 2 membrane-embedded substrate-binding proteins (S component), 2 ATP-binding proteins (A component) and 2 transmembrane proteins (T component).

It is found in the cell membrane. Functionally, ATP-binding (A) component of a common energy-coupling factor (ECF) ABC-transporter complex. Unlike classic ABC transporters this ECF transporter provides the energy necessary to transport a number of different substrates. This Acetivibrio thermocellus (strain ATCC 27405 / DSM 1237 / JCM 9322 / NBRC 103400 / NCIMB 10682 / NRRL B-4536 / VPI 7372) (Clostridium thermocellum) protein is Energy-coupling factor transporter ATP-binding protein EcfA2.